We begin with the raw amino-acid sequence, 164 residues long: ATP synthase B' chain, cyanelle (164 aa).

The chain crosses the membrane as a helical span at residues 26–46 (ATLPVMMVQLLVLMLILNAVF).

This sequence belongs to the ATPase B chain family. In terms of assembly, F-type ATPases have 2 components, F(1) - the catalytic core - and F(0) - the membrane proton channel. F(1) has five subunits: alpha(3), beta(3), gamma(1), delta(1), epsilon(1). F(0) has four main subunits: a(1), b(1), b'(1) and c(10-14). The alpha and beta chains form an alternating ring which encloses part of the gamma chain. F(1) is attached to F(0) by a central stalk formed by the gamma and epsilon chains, while a peripheral stalk is formed by the delta, b and b' chains.

Its subcellular location is the plastid. It is found in the cyanelle thylakoid membrane. F(1)F(0) ATP synthase produces ATP from ADP in the presence of a proton or sodium gradient. F-type ATPases consist of two structural domains, F(1) containing the extramembraneous catalytic core and F(0) containing the membrane proton channel, linked together by a central stalk and a peripheral stalk. During catalysis, ATP synthesis in the catalytic domain of F(1) is coupled via a rotary mechanism of the central stalk subunits to proton translocation. In terms of biological role, component of the F(0) channel, it forms part of the peripheral stalk, linking F(1) to F(0). The b'-subunit is a diverged and duplicated form of b found in plants and photosynthetic bacteria. The chain is ATP synthase B' chain, cyanelle from Cyanophora paradoxa.